We begin with the raw amino-acid sequence, 58 residues long: Ranakinin-N (58 aa).

The N-terminal stretch at 1–22 (MFTMKKSLLLLFFLGTISMSLC) is a signal peptide. A propeptide spanning residues 23 to 43 (EEKRDADEEETEGEAKMEDIK) is cleaved from the precursor. A disordered region spans residues 25-58 (KRDADEEETEGEAKMEDIKRAEAVPPGFTPFRKP). The span at 35-46 (GEAKMEDIKRAE) shows a compositional bias: basic and acidic residues.

In terms of tissue distribution, expressed by the skin glands.

Its subcellular location is the secreted. Functionally, induces contraction of intestinal smooth muscle in isolated guinea pig ileum. May induce relaxation of arterial smooth muscle. May target bradykinin receptors (BDKRB). Lacks antibacterial activity against the Gram-positive bacterium S.aureus and the Gram-negative bacteria E.coli and B.dysenteria, and antifungal activity against C.albicans. The polypeptide is Ranakinin-N (Hylarana nigrovittata (Black-striped frog)).